The chain runs to 474 residues: 3-isopropylmalate dehydratase large subunit (474 aa).

Residues C350, C411, and C414 each coordinate [4Fe-4S] cluster.

The protein belongs to the aconitase/IPM isomerase family. LeuC type 1 subfamily. As to quaternary structure, heterodimer of LeuC and LeuD. Requires [4Fe-4S] cluster as cofactor.

The catalysed reaction is (2R,3S)-3-isopropylmalate = (2S)-2-isopropylmalate. The protein operates within amino-acid biosynthesis; L-leucine biosynthesis; L-leucine from 3-methyl-2-oxobutanoate: step 2/4. Functionally, catalyzes the isomerization between 2-isopropylmalate and 3-isopropylmalate, via the formation of 2-isopropylmaleate. The polypeptide is 3-isopropylmalate dehydratase large subunit (Hydrogenovibrio crunogenus (strain DSM 25203 / XCL-2) (Thiomicrospira crunogena)).